The following is a 171-amino-acid chain: Large ribosomal subunit protein uL10 (171 aa).

It belongs to the universal ribosomal protein uL10 family. As to quaternary structure, part of the ribosomal stalk of the 50S ribosomal subunit. The N-terminus interacts with L11 and the large rRNA to form the base of the stalk. The C-terminus forms an elongated spine to which L12 dimers bind in a sequential fashion forming a multimeric L10(L12)X complex.

Its function is as follows. Forms part of the ribosomal stalk, playing a central role in the interaction of the ribosome with GTP-bound translation factors. This is Large ribosomal subunit protein uL10 from Phenylobacterium zucineum (strain HLK1).